The chain runs to 42 residues: Potassium channel gamma toxin gamma-KTx 1.9 (42 aa).

Disulfide bonds link cysteine 5/cysteine 23, cysteine 11/cysteine 34, cysteine 20/cysteine 39, and cysteine 24/cysteine 41.

This sequence belongs to the ergtoxin family. Gamma-KTx 1 subfamily. As to expression, expressed by the venom gland.

The protein localises to the secreted. Its function is as follows. Blocks human voltage-gated potassium channel Kv11.1/KCNH2/ERG1 (IC(50)=16.9 nM). The polypeptide is Potassium channel gamma toxin gamma-KTx 1.9 (Centruroides tecomanus (Scorpion)).